We begin with the raw amino-acid sequence, 802 residues long: MEEEGGSSGGAAGTSADGGDGGEQLLTVKHELRTANLTGHAEKVGIENFELLKVLGTGAYGKVFLVRKISGHDTGKLYAMKVLKKATIVQKAKTTEHTRTERQVLEHIRQSPFLVTLHYAFQTETKLHLILDYINGGELFTHLSQRERFTEHEVQIYVGEIVLALEHLHKLGIIYRDIKLENILLDSNGHVVLTDFGLSKEFVADETERAYSFCGTIEYMAPDIVRGGDSGHDKAVDWWSLGVLMYELLTGASPFTVDGEKNSQAEISRRILKSEPPYPQEMSALAKDLIQRLLMKDPKKRLGCGPRDADEIKEHLFFQKINWDDLAAKKVPAPFKPVIRDELDVSNFAEEFTEMDPTYSPAALPQSSEKLFQGYSFVAPSILFKRNAAVIDPLQFHMGVERPGVTNVARSAMMKDSPFYQHYDLDLKDKPLGEGSFSICRKCVHKKSNQAFAVKIISKRMEANTQKEITALKLCEGHPNIVKLHEVFHDQLHTFLVMELLNGGELFERIKKKKHFSETEASYIMRKLVSAVSHMHDVGVVHRDLKPENLLFTDENDNLEIKIIDFGFARLKPPDNQPLKTPCFTLHYAAPELLNQNGYDESCDLWSLGVILYTMLSGQVPFQSHDRSLTCTSAVEIMKKIKKGDFSFEGEAWKNVSQEAKDLIQGLLTVDPNKRLKMSGLRYNEWLQDGSQLSSNPLMTPDILGSSGAAVHTCVKATFHAFNKYKREGFCLQNVDKAPLAKRRKMKKTSTSTETRSSSSESSHSSSSHSHGKTTPTKTLQPSNPADSNNPETLFQFSDSVA.

Over residues 1–22 (MEEEGGSSGGAAGTSADGGDGG) the composition is skewed to gly residues. The disordered stretch occupies residues 1–23 (MEEEGGSSGGAAGTSADGGDGGE). One can recognise a Protein kinase 1 domain in the interval 49–318 (FELLKVLGTG…ADEIKEHLFF (270 aa)). ATP is bound by residues 55 to 63 (LGTGAYGKV) and K81. Residue D177 is the Proton acceptor of the active site. S212 carries the phosphoserine; by autocatalysis modification. The region spanning 319–387 (QKINWDDLAA…VAPSILFKRN (69 aa)) is the AGC-kinase C-terminal domain. S360 bears the Phosphoserine; by MAPK1, MAPK3 and MAPK14 mark. A phosphoserine; by autocatalysis mark is found at S376 and S381. A Protein kinase 2 domain is found at 426 to 687 (DLKDKPLGEG…MSGLRYNEWL (262 aa)). ATP-binding positions include 432-440 (LGEGSFSIC) and K455. The Proton acceptor role is filled by D544. T581 is subject to Phosphothreonine; by MAPK1, MAPK3 and MAPK14. A phosphoserine mark is found at S647, S657, S691, and S695. A Phosphothreonine; by MAPK1, MAPK3 and MAPK14 modification is found at T700. Residues 741–802 (AKRRKMKKTS…TLFQFSDSVA (62 aa)) form a disordered region. Positions 749–779 (TSTSTETRSSSSESSHSSSSHSHGKTTPTKT) are enriched in low complexity. A phosphoserine; by autocatalysis mark is found at S750, S752, and S758. A compositionally biased stretch (polar residues) spans 780 to 802 (LQPSNPADSNNPETLFQFSDSVA). The residue at position 798 (S798) is a Phosphoserine.

Belongs to the protein kinase superfamily. AGC Ser/Thr protein kinase family. S6 kinase subfamily. Forms a complex with either MAPK1/ERK2 or MAPK3/ERK1 in quiescent cells which transiently dissociates following mitogenic stimulation. Also associates with MAPK14/p38-alpha. Activated RPS6KA5 associates with and phosphorylates the NF-kappa-B p65 subunit RELA. Interacts with CREBBP and EP300. Mg(2+) is required as a cofactor. Ser-376 and Thr-581 phosphorylation is required for kinase activity. Ser-376 and Ser-212 are autophosphorylated by the C-terminal kinase domain, and their phosphorylation is essential for the catalytic activity of the N-terminal kinase domain. Phosphorylated at Ser-360, Thr-581 and Thr-700 by MAPK1/ERK2, MAPK3/ERK1 and MAPK14/p38-alpha. Autophosphorylated at Ser-750, Ser-752 and Ser-758 by the N-terminal kinase domain. In terms of processing, ubiquitinated. As to expression, widely expressed with high levels in heart, brain and placenta. Less abundant in lung, kidney and liver.

The protein resides in the nucleus. The protein localises to the cytoplasm. It carries out the reaction L-seryl-[protein] + ATP = O-phospho-L-seryl-[protein] + ADP + H(+). The enzyme catalyses L-threonyl-[protein] + ATP = O-phospho-L-threonyl-[protein] + ADP + H(+). Its activity is regulated as follows. Activated by phosphorylation at Ser-360, Thr-581 and Thr-700 by MAPK1/ERK2, MAPK3/ERK1 and MAPK14/p38-alpha, and by further autophosphorylation of Ser-212, Ser-376 and Ser-381 by the activated C-terminal kinase domain. The active N-terminal kinase domain finally phosphorylates downstream substrates, as well as Ser-750, Ser-752 and Ser-758 in its own C-terminal region. Its function is as follows. Serine/threonine-protein kinase that is required for the mitogen or stress-induced phosphorylation of the transcription factors CREB1 and ATF1 and for the regulation of the transcription factors RELA, STAT3 and ETV1/ER81, and that contributes to gene activation by histone phosphorylation and functions in the regulation of inflammatory genes. Phosphorylates CREB1 and ATF1 in response to mitogenic or stress stimuli such as UV-C irradiation, epidermal growth factor (EGF) and anisomycin. Plays an essential role in the control of RELA transcriptional activity in response to TNF and upon glucocorticoid, associates in the cytoplasm with the glucocorticoid receptor NR3C1 and contributes to RELA inhibition and repression of inflammatory gene expression. In skeletal myoblasts is required for phosphorylation of RELA at 'Ser-276' during oxidative stress. In erythropoietin-stimulated cells, is necessary for the 'Ser-727' phosphorylation of STAT3 and regulation of its transcriptional potential. Phosphorylates ETV1/ER81 at 'Ser-191' and 'Ser-216', and thereby regulates its ability to stimulate transcription, which may be important during development and breast tumor formation. Directly represses transcription via phosphorylation of 'Ser-1' of histone H2A. Phosphorylates 'Ser-10' of histone H3 in response to mitogenics, stress stimuli and EGF, which results in the transcriptional activation of several immediate early genes, including proto-oncogenes c-fos/FOS and c-jun/JUN. May also phosphorylate 'Ser-28' of histone H3. Mediates the mitogen- and stress-induced phosphorylation of high mobility group protein 1 (HMGN1/HMG14). In lipopolysaccharide-stimulated primary macrophages, acts downstream of the Toll-like receptor TLR4 to limit the production of pro-inflammatory cytokines. Functions probably by inducing transcription of the MAP kinase phosphatase DUSP1 and the anti-inflammatory cytokine interleukin 10 (IL10), via CREB1 and ATF1 transcription factors. Plays a role in neuronal cell death by mediating the downstream effects of excitotoxic injury. Phosphorylates TRIM7 at 'Ser-107' in response to growth factor signaling via the MEK/ERK pathway, thereby stimulating its ubiquitin ligase activity. In Homo sapiens (Human), this protein is Ribosomal protein S6 kinase alpha-5 (RPS6KA5).